Consider the following 252-residue polypeptide: Zinc finger CCCH domain-containing protein 28 (252 aa).

The span at 1–21 shows a compositional bias: basic and acidic residues; sequence MSHRRDYGSDAVHVRITHDPP. Residues 1-31 are disordered; sequence MSHRRDYGSDAVHVRITHDPPPENCFPNSGD. C3H1-type zinc fingers lie at residues 71–99 and 143–171; these read FFKT…HSAE and NWKT…HGPS.

The sequence is that of Zinc finger CCCH domain-containing protein 28 from Arabidopsis thaliana (Mouse-ear cress).